Consider the following 1553-residue polypeptide: ABC-type transporter cctS (1553 aa).

Transmembrane regions (helical) follow at residues 27 to 47 (LIPL…YFHA), 90 to 110 (LEVA…IFSG), 114 to 134 (DLTS…ILFV), and 151 to 171 (SVLY…AILG). N176 is a glycosylation site (N-linked (GlcNAc...) asparagine). A run of 5 helical transmembrane segments spans residues 177-197 (FTIA…FHWT), 286-306 (LLWQ…PPVL), 324-344 (TAWL…VAGC), 413-433 (GYLY…TYLL), and 438-458 (GISG…NILI). The 290-residue stretch at 293–582 (ATLNSFAVFV…IADAITFLLR (290 aa)) folds into the ABC transmembrane type-1 1 domain. N-linked (GlcNAc...) asparagine glycosylation occurs at N524. Transmembrane regions (helical) follow at residues 527 to 547 (TFFS…TVVW) and 550 to 570 (SMGT…RIPF). N617 carries N-linked (GlcNAc...) asparagine glycosylation. The region spanning 635–874 (NKRSDIQLTE…GRIDADIMQN (240 aa)) is the ABC transporter 1 domain. 670–677 (GPSGSGKS) contacts ATP. N-linked (GlcNAc...) asparagine glycosylation is present at N725. A helical transmembrane segment spans residues 948–970 (WYWVLVLFMFGIQQFISLATNIW). The 305-residue stretch at 951-1255 (VLVLFMFGIQ…FVQLYAIVQQ (305 aa)) folds into the ABC transmembrane type-1 2 domain. The N-linked (GlcNAc...) asparagine glycan is linked to N992. A helical membrane pass occupies residues 1017 to 1037 (IYVAICLAYAFFTFARDLIVF). A glycan (N-linked (GlcNAc...) asparagine) is linked at N1085. The next 4 membrane-spanning stretches (helical) occupy residues 1086-1108 (ISTF…VFIS), 1113-1135 (AFLI…FING), 1204-1224 (FLGS…LESV), and 1229-1249 (AALV…FVQL). The region spanning 1294–1533 (VRFDAYTTRY…DDDGIFRRLC (240 aa)) is the ABC transporter 2 domain. ATP is bound at residue 1328 to 1335 (GRTGAGKS).

It belongs to the ABC transporter superfamily.

It localises to the membrane. The protein operates within mycotoxin biosynthesis. In terms of biological role, ABC-type transporter; part of the gene cluster that mediates the biosynthesis of the mycotoxin cyclochlorotine, a hepatotoxic and carcinogenic cyclic chlorinated pentapeptide. CctS is essential for the biosynthesis of cyclochlorotine, maybe as a chloride channel that supplies chloride for chlorination by cctP2. This chain is ABC-type transporter cctS, found in Talaromyces islandicus (Penicillium islandicum).